Here is a 158-residue protein sequence, read N- to C-terminus: S-ribosylhomocysteine lyase (158 aa).

3 residues coordinate Fe cation: His-54, His-58, and Cys-124.

The protein belongs to the LuxS family. Homodimer. Fe cation is required as a cofactor.

The catalysed reaction is S-(5-deoxy-D-ribos-5-yl)-L-homocysteine = (S)-4,5-dihydroxypentane-2,3-dione + L-homocysteine. Its function is as follows. Involved in the synthesis of autoinducer 2 (AI-2) which is secreted by bacteria and is used to communicate both the cell density and the metabolic potential of the environment. The regulation of gene expression in response to changes in cell density is called quorum sensing. Catalyzes the transformation of S-ribosylhomocysteine (RHC) to homocysteine (HC) and 4,5-dihydroxy-2,3-pentadione (DPD). This chain is S-ribosylhomocysteine lyase, found in Limosilactobacillus reuteri (Lactobacillus reuteri).